The following is a 127-amino-acid chain: Protein chibby homolog 1 (127 aa).

A disordered region spans residues 1–25 (MPLFGSIFSPKKTPPRKSASLSNLH). 2 positions are modified to phosphoserine: S9 and S20. Positions 60 to 112 (VADSVISGGVDRRETQRLRKRNQQLEEENNLLRLKVDILLDMLSETTAESHLK) are minimal region for the interaction with PKD2. The stretch at 68–110 (GVDRRETQRLRKRNQQLEEENNLLRLKVDILLDMLSETTAESH) forms a coiled coil. Residues 77–98 (LRKRNQQLEEENNLLRLKVDIL) form a leucine-zipper; mediates homodimerization region.

Belongs to the chibby family. In terms of assembly, homodimer. Homodimerization is essential for nuclear localization and interaction with KPNA4 but is dispensable for interaction with CTNNB1. Interacts with polycystin-2/PKD2 and GM130. Interacts with the C-terminal region of CTNNB1. Interacts (C-terminus) with TCIM (C-terminus), TCIM competes with CTNNB1 for the interaction with CBY1. Interacts with FAM92A; this interaction facilitates targeting of FAM92A to cilium basal body. Interacts with CIBAR2. Interacts with KPNA4. Found in heart, brain, lung, liver, muscle, kidney and testis. Levels are approximately 3-fold higher in embryonic and adult heart than in lung or liver.

Its subcellular location is the nucleus speckle. The protein resides in the cytoplasm. It localises to the cytoskeleton. It is found in the cilium basal body. The protein localises to the microtubule organizing center. Its subcellular location is the centrosome. The protein resides in the centriole. It localises to the golgi apparatus. It is found in the trans-Golgi network. The protein localises to the cell projection. Its subcellular location is the cilium. The protein resides in the flagellum. It localises to the nucleus. In terms of biological role, inhibits the Wnt/Wingless pathway by binding to CTNNB1/beta-catenin and inhibiting beta-catenin-mediated transcriptional activation through competition with TCF/LEF transcription factors. Has also been shown to play a role in regulating the intracellular trafficking of polycystin-2/PKD2 and possibly of other intracellular proteins. Promotes adipocyte and cardiomyocyte differentiation. The sequence is that of Protein chibby homolog 1 (Cby1) from Mus musculus (Mouse).